A 1407-amino-acid chain; its full sequence is DNA-directed RNA polymerase subunit beta' (1407 aa).

Positions 70, 72, 85, and 88 each coordinate Zn(2+). 3 residues coordinate Mg(2+): Asp460, Asp462, and Asp464. Positions 814, 888, 895, and 898 each coordinate Zn(2+).

Belongs to the RNA polymerase beta' chain family. As to quaternary structure, the RNAP catalytic core consists of 2 alpha, 1 beta, 1 beta' and 1 omega subunit. When a sigma factor is associated with the core the holoenzyme is formed, which can initiate transcription. Mg(2+) is required as a cofactor. Zn(2+) serves as cofactor.

It carries out the reaction RNA(n) + a ribonucleoside 5'-triphosphate = RNA(n+1) + diphosphate. Functionally, DNA-dependent RNA polymerase catalyzes the transcription of DNA into RNA using the four ribonucleoside triphosphates as substrates. This Pectobacterium atrosepticum (strain SCRI 1043 / ATCC BAA-672) (Erwinia carotovora subsp. atroseptica) protein is DNA-directed RNA polymerase subunit beta'.